Here is a 267-residue protein sequence, read N- to C-terminus: Small ribosomal subunit protein uS2 (267 aa).

The interval 234–267 (DNAEEELAEAISQEEPSAAEELPDDMADNENEFE) is disordered. Residues 250–267 (SAAEELPDDMADNENEFE) show a composition bias toward acidic residues.

This sequence belongs to the universal ribosomal protein uS2 family.

This chain is Small ribosomal subunit protein uS2, found in Dichelobacter nodosus (strain VCS1703A).